Reading from the N-terminus, the 941-residue chain is Protocadherin alpha-12 (941 aa).

Residues 1-29 (MVIIGPRGPGSQRLLLSLLLLAAWEVGSG) form the signal peptide. 6 Cadherin domains span residues 30–133 (QLHY…PPVF), 134–242 (RERE…GPAF), 243–350 (DKPS…VPEV), 351–455 (MVTS…APAF), 456–565 (AQPE…APAL), and 581–678 (VPRS…APKT). Over 30–697 (QLHYSVYEEA…DPEAALVDIN (668 aa)) the chain is Extracellular. Asparagine 257 and asparagine 265 each carry an N-linked (GlcNAc...) asparagine glycan. The N-linked (GlcNAc...) asparagine glycan is linked to asparagine 548. Residues 698–718 (VYLIIAICAVSSLLVLTLLLY) traverse the membrane as a helical segment. Topologically, residues 719-941 (TALRCSAPPT…GNSTTDNSDQ (223 aa)) are cytoplasmic. PXXP repeat units follow at residues 734-737 (PGKP), 790-793 (PRQP), 823-826 (PGGP), 863-866 (GPGN), and 882-885 (PGSP). A 5 X 4 AA repeats of P-X-X-P region spans residues 734 to 885 (PGKPTLVCSS…PDKFIIPGSP (152 aa)). The segment at 818–941 (ILRAGPGGPD…GNSTTDNSDQ (124 aa)) is disordered. The span at 900–914 (DKSDFITFGKKEETK) shows a compositional bias: basic and acidic residues.

The protein localises to the cell membrane. Potential calcium-dependent cell-adhesion protein. May be involved in the establishment and maintenance of specific neuronal connections in the brain. In Homo sapiens (Human), this protein is Protocadherin alpha-12 (PCDHA12).